The following is a 445-amino-acid chain: Putative transcription factor bHLH056 (445 aa).

Disordered stretches follow at residues 36-70 (NQTH…PPHL), 224-260 (QIQP…AEMH), and 365-445 (PFPN…QPTA). A compositionally biased stretch (basic and acidic residues) spans 231 to 246 (SKLKAREETHGTEEAR). The region spanning 255–304 (RTAEMHNLAERRRREKINEKMKTLQQLIPRCNKSTKVSTLDDAIEYVKSL) is the bHLH domain. Residues 418–433 (QGQTTSQLSSGQASSS) are compositionally biased toward low complexity.

As to quaternary structure, homodimer.

Its subcellular location is the nucleus. This is Putative transcription factor bHLH056 (BHLH56) from Arabidopsis thaliana (Mouse-ear cress).